The primary structure comprises 883 residues: Probable valine--tRNA ligase, cytoplasmic (883 aa).

Residues 1-23 (MTLKMDRKALKEEKKKQKLEKFL) show a composition bias toward basic and acidic residues. Positions 1–49 (MTLKMDRKALKEEKKKQKLEKFLNKKTTQSKISKAPKPAKNKSSSGYDP) are disordered. The span at 30–45 (SKISKAPKPAKNKSSS) shows a compositional bias: low complexity. A 'HIGH' region motif is present at residues 82 to 92 (PNITGSLHIGH). The 'KMSKS' region signature appears at 586-590 (KMSKS). Lys-589 contacts ATP.

It belongs to the class-I aminoacyl-tRNA synthetase family.

The protein resides in the cytoplasm. It carries out the reaction tRNA(Val) + L-valine + ATP = L-valyl-tRNA(Val) + AMP + diphosphate. The chain is Probable valine--tRNA ligase, cytoplasmic from Vairimorpha ceranae (strain BRL01) (Microsporidian parasite).